A 256-amino-acid polypeptide reads, in one-letter code: Nuclear shuttle protein (256 aa).

Residues 21-42 (HSTGKRSRNVSRIDFKRRSSKY) carry the Bipartite nuclear localization signal motif. Positions 81-96 (SLGKTEPSRSRSYIKL) match the Nuclear localization signal motif. The tract at residues 150 to 187 (ELFGARIHSHGNLAVSSALKDRFYIRHVFKRVISVEKD) is interaction with Arabidopsis thaliana NSI protein.

Belongs to the begomovirus nuclear shuttle protein family. As to quaternary structure, binds to single-stranded and double-stranded viral DNA. Interacts with the host nuclear shuttle interacting (NSI) protein. This interaction may allow NSP to recruit NSI monomers to the viral genome and thus regulate nuclear export of viral genome by NSP.

Its subcellular location is the host nucleus. It is found in the host cytoplasm. The protein resides in the host cell membrane. Its function is as follows. Binds to the genomic viral ssDNA, shuttles it into and out of the cell nucleus. Begomoviruses use 2 proteins to transport their DNA from cell to cell. The nuclear shuttle protein (NSP) shuttles it between nucleus and cytoplasm and the movement protein (MP) probably transports the DNA-NSP complex to the cell periphery and facilitates movement across the cell wall. The sequence is that of Nuclear shuttle protein from Solanum lycopersicum (Tomato).